A 282-amino-acid chain; its full sequence is Large ribosomal subunit protein uL2 (282 aa).

Positions 215 to 282 (RHKGIRPTVR…IIRSRKETKK (68 aa)) are disordered. Residues 263–282 (RNPKKPSTKLIIRSRKETKK) show a composition bias toward basic residues.

The protein belongs to the universal ribosomal protein uL2 family. As to quaternary structure, part of the 50S ribosomal subunit. Forms a bridge to the 30S subunit in the 70S ribosome.

One of the primary rRNA binding proteins. Required for association of the 30S and 50S subunits to form the 70S ribosome, for tRNA binding and peptide bond formation. It has been suggested to have peptidyltransferase activity; this is somewhat controversial. Makes several contacts with the 16S rRNA in the 70S ribosome. The protein is Large ribosomal subunit protein uL2 of Mesomycoplasma hyopneumoniae (strain 7448) (Mycoplasma hyopneumoniae).